Reading from the N-terminus, the 171-residue chain is Large ribosomal subunit protein uL22 (171 aa).

It belongs to the universal ribosomal protein uL22 family.

The polypeptide is Large ribosomal subunit protein uL22 (RPL17) (Zea mays (Maize)).